Here is a 475-residue protein sequence, read N- to C-terminus: MVVCKYFLQNRCRYGTNCKNQHTVPSNGQNAFSKVNVFRPENGRPPIWVQRRLKRSDLDNLLPNRRMKDINDDLKNAKPQWPFTGYSVVENLPSIYEGDVSPEELRWWAYQAKATNNMQAYEQRQKQLMDDVEAKAAAVKRSPAAAFDEMRNKLVGKTNYKSIFDKSTSNSTVTSNQFNKPTQNSPFNSFSNNNNSFNNNQQANDIFGAPTTSAFTSQLNASPFSQNTSSNSFTGSNPVQNNPSSFGSSSFGSATSGPSAFGGISQPNSSFVNSGQGIPNSSFSSFSQVASGFSQSQNVNDPSSIFGPTVASGFGIQNQPQQSAFQNLNTQFSLPNNSQPVFGHTSLTQPVNPNGFTVQPPATFMQQPQGPFVPPNTTFESPFANVTSKISASGFSNDNPANKNIIQTPMFGSSNTIDGPINPIGASSIQTLDDQVEMSNSNQNLAFPPEMIQQFEAQDFIPGKVPTTAPPPQFC.

The segment at 1-25 (MVVCKYFLQNRCRYGTNCKNQHTVP) adopts a C3H1-type zinc-finger fold. The segment covering 165 to 182 (DKSTSNSTVTSNQFNKPT) has biased composition (polar residues). 2 disordered regions span residues 165-208 (DKST…DIFG) and 220-252 (NASPFSQNTSSNSFTGSNPVQNNPSSFGSSSFG). Positions 183–204 (QNSPFNSFSNNNNSFNNNQQAN) are enriched in low complexity. The span at 220 to 242 (NASPFSQNTSSNSFTGSNPVQNN) shows a compositional bias: polar residues. The span at 243–252 (PSSFGSSSFG) shows a compositional bias: low complexity.

It is found in the nucleus. Involved in the cell polarity process where it is required for the correct termination of microtubule growth at the cell ends during interphase. This is Nucleoporin-like protein amo1 (amo1) from Schizosaccharomyces pombe (strain 972 / ATCC 24843) (Fission yeast).